The sequence spans 710 residues: Lactoperoxidase (710 aa).

The signal sequence occupies residues 1-22 (MKVLLRLPALLASLTLLQMAAS). The propeptide occupies 23–98 (TRNATRTATI…WEQSLKRLRR (76 aa)). Asn25, Asn104, and Asn131 each carry an N-linked (GlcNAc...) asparagine glycan. A disulfide bond links Cys130 and Cys143. Position 223 (Asp223) interacts with heme b. His224 (proton acceptor) is an active-site residue. Asp225 is a binding site for Ca(2+). Residue Asn238 is glycosylated (N-linked (GlcNAc...) asparagine). 2 disulfide bridges follow: Cys244-Cys254 and Cys248-Cys272. Thr299, Phe301, Asp303, and Ser305 together coordinate Ca(2+). Ser313 is subject to Phosphoserine. Residue Asn320 is glycosylated (N-linked (GlcNAc...) asparagine). A disulfide bridge connects residues Cys352 and Cys363. Heme b contacts are provided by Glu373 and His466. Position 480 is a 3'-nitrotyrosine (Tyr480). Intrachain disulfides connect Cys571-Cys628 and Cys669-Cys694.

Belongs to the peroxidase family. XPO subfamily. Requires Ca(2+) as cofactor. Heme b is required as a cofactor. In terms of tissue distribution, expressed in the lacrimal gland with higher levels and 3-fold higher activity in adult females than males and secreted into tears (at protein level).

Its subcellular location is the secreted. The protein localises to the cytoplasm. The catalysed reaction is 2 a phenolic donor + H2O2 = 2 a phenolic radical donor + 2 H2O. The enzyme catalyses thiocyanate + H2O2 + H(+) = hypothiocyanous acid + H2O. It catalyses the reaction iodide + H2O2 = hypoiodite + H2O. Functionally, heme-containing oxidoreductase which catalyzes the conversion of thiocyanate (SCN(-)) into antimicrobial agent hypothiocyanous acid (OSCN(-)) in the presence of hydrogen peroxide (H2O2). Also involved in the conversion of iodide (I(-)) into hypoiodite (IO(-)) in the presence of H2O2. Responsible for the inactivation of a wide range of micro-organisms and hence, important component of defense mechanism. May be implicated in airway host defense against infection. May contribute to maintaining an appropriate H2O2 cellular level, therefore protecting cells from H2O2-caused injuries and inflammation. The protein is Lactoperoxidase (LPO) of Mesocricetus auratus (Golden hamster).